A 162-amino-acid chain; its full sequence is Allophycocyanin alpha-B chain (162 aa).

Asn71 is subject to N4-methylasparagine. Residue Cys81 participates in (2R,3E)-phycocyanobilin binding.

The protein belongs to the phycobiliprotein family. Contains one covalently linked phycocyanobilin chromophore.

It is found in the plastid. The protein localises to the cyanelle thylakoid membrane. Allophycocyanin is a photosynthetic bile pigment-protein complex with maximum absorption at approximately 650 nanometers. In Cyanophora paradoxa, this protein is Allophycocyanin alpha-B chain (apcD).